Here is a 277-residue protein sequence, read N- to C-terminus: Diaminopimelate epimerase (277 aa).

Residues asparagine 11 and asparagine 62 each contribute to the substrate site. The active-site Proton donor is cysteine 71. Substrate is bound by residues 72 to 73 (GN), asparagine 160, asparagine 193, and 211 to 212 (ER). The active-site Proton acceptor is the cysteine 220. 221-222 (GT) lines the substrate pocket.

It belongs to the diaminopimelate epimerase family. In terms of assembly, homodimer.

The protein localises to the cytoplasm. It carries out the reaction (2S,6S)-2,6-diaminopimelate = meso-2,6-diaminopimelate. It functions in the pathway amino-acid biosynthesis; L-lysine biosynthesis via DAP pathway; DL-2,6-diaminopimelate from LL-2,6-diaminopimelate: step 1/1. Its function is as follows. Catalyzes the stereoinversion of LL-2,6-diaminopimelate (L,L-DAP) to meso-diaminopimelate (meso-DAP), a precursor of L-lysine. The sequence is that of Diaminopimelate epimerase from Methanococcus maripaludis (strain C5 / ATCC BAA-1333).